Here is a 786-residue protein sequence, read N- to C-terminus: MWGSVAVVWAICLACIQPAVFPWILPVRSNKDRPRPAHGALTEKVECFSDYMTLQIPSSHVQGLKQWLVGVLRLPGSKRAPNHLDSLLTKCGYLLHPAHEGGFIFRALYSGCFVQKEKANYRLEIRMFQKGAKRLKQSDRYIMRCPMMVARLGEQSVRCHPSFIQVSRPWPPRTDAGQTPWLLSLRGELVASLEDASLMGLEVDIGATMVTIQSPRQELLQRQEVWNTSLELLPLWLVSGSYAYSFEAACPLVSSQPGSEISVHIPKQRLGLVKRGSLVEESLSPRFLQVQQTDTFTVAEDRDFVIVSIPSMRLLQDQPCQKARESPGTQAFYRVDLSLDFAEMDSPVHWTVENFFQCVGSREDSLFSTVTPRTTLPTQSPGWETTPAETPPAASPPLQTPQMAVLEEPPQHFVHQSAKESTKQELAAAFMQITRPARGSWVSMASPSSSAMQEHQGPQTPPEKADLSPHPQTPATLSSEHTEVSQAGPGPSHYVSLAPNSLSTHLSSEITSSLWPSWPSDGPPMLLSSEPSVKLTEVPRATRAGQDSIQPSRSPFPPGELSRETVNSTESTEPIPREPAYIREEFPPFTKSFMSSLAEEGLIFHPDPKRPQERPIVKAEKPLQNDHGPSGEETRHYLDLSTSEPSQEMKELGVDATFTTSRRRQPDARAYLGTSRPELTGRPRVGTAALQTTLHKGLLASTSERPAAPSEGALQLESAPSWPEGWHDLGAAHTASPLSSHTHSPLVPTQAMFPGSDEPGNSLPGSQGSVESRLLPTTDSHQSPEL.

The N-terminal stretch at 1–18 is a signal peptide; sequence MWGSVAVVWAICLACIQP.

In terms of tissue distribution, expressed specifically by cells of the ciliated left-right organizer.

Functionally, plays a role in left-right patterning process. The protein is Ciliated left-right organizer ZP-N domains-containing protein (Ciroz) of Mus musculus (Mouse).